The following is a 347-amino-acid chain: Selenide, water dikinase (347 aa).

U17 is an active-site residue. A non-standard amino acid (selenocysteine) is located at residue U17. Residues K20 and 48 to 50 (TAD) each bind ATP. D51 lines the Mg(2+) pocket. ATP is bound by residues D68, D91, and 139–141 (GHS). D91 lines the Mg(2+) pocket. D227 provides a ligand contact to Mg(2+).

It belongs to the selenophosphate synthase 1 family. Class I subfamily. As to quaternary structure, homodimer. Requires Mg(2+) as cofactor.

It carries out the reaction hydrogenselenide + ATP + H2O = selenophosphate + AMP + phosphate + 2 H(+). Synthesizes selenophosphate from selenide and ATP. The polypeptide is Selenide, water dikinase (Haemophilus influenzae (strain 86-028NP)).